The following is an 83-amino-acid chain: Small ribosomal subunit protein uS17 (83 aa).

It belongs to the universal ribosomal protein uS17 family. In terms of assembly, part of the 30S ribosomal subunit.

In terms of biological role, one of the primary rRNA binding proteins, it binds specifically to the 5'-end of 16S ribosomal RNA. The sequence is that of Small ribosomal subunit protein uS17 from Ehrlichia canis (strain Jake).